A 262-amino-acid chain; its full sequence is Acyl-[acyl-carrier-protein]--UDP-N-acetylglucosamine O-acyltransferase (262 aa).

This sequence belongs to the transferase hexapeptide repeat family. LpxA subfamily. Homotrimer.

Its subcellular location is the cytoplasm. The catalysed reaction is a (3R)-hydroxyacyl-[ACP] + UDP-N-acetyl-alpha-D-glucosamine = a UDP-3-O-[(3R)-3-hydroxyacyl]-N-acetyl-alpha-D-glucosamine + holo-[ACP]. It functions in the pathway glycolipid biosynthesis; lipid IV(A) biosynthesis; lipid IV(A) from (3R)-3-hydroxytetradecanoyl-[acyl-carrier-protein] and UDP-N-acetyl-alpha-D-glucosamine: step 1/6. Functionally, involved in the biosynthesis of lipid A, a phosphorylated glycolipid that anchors the lipopolysaccharide to the outer membrane of the cell. The chain is Acyl-[acyl-carrier-protein]--UDP-N-acetylglucosamine O-acyltransferase from Burkholderia vietnamiensis (strain G4 / LMG 22486) (Burkholderia cepacia (strain R1808)).